The chain runs to 146 residues: uncharacterized protein (146 aa).

The 137-residue stretch at Met1–Glu137 folds into the HTH marR-type domain.

This is an uncharacterized protein from Staphylococcus aureus (strain MRSA252).